The sequence spans 574 residues: Actin-binding protein wsp1 (574 aa).

The region spanning 19 to 130 (IPKSTNKIIA…KKVLDKGCHP (112 aa)) is the WH1 domain. Disordered regions lie at residues 144–186 (KGSS…ELLN), 221–494 (AGTP…IAEL), and 517–574 (KSRK…DEWD). Polar residues predominate over residues 149-158 (HAPNNSNIQP). Pro residues-rich tracts occupy residues 230 to 240 (PPIPPSIPSSR) and 251 to 260 (PAPPPIPPPS). Low complexity-rich tracts occupy residues 297–306 (SRVSAAALAA) and 324–335 (KPPIGNGSSNSS). A compositionally biased stretch (pro residues) spans 352–368 (PLPPQGRSAPPPPPPRS). Serine 386 carries the phosphoserine modification. The segment covering 415–485 (PPVPTPPSLP…PPPAPAPAPA (71 aa)) has biased composition (pro residues). Residues 499–518 (GRANLMASIRASGGMDLLKS) enclose the WH2 domain. Residues 521–545 (VSASPSVASTKTSNPPVEAPPSNNL) are compositionally biased toward polar residues. Residues 563-574 (SDEEDEDDDEWD) show a composition bias toward acidic residues.

As to quaternary structure, interacts with vrp1.

Its subcellular location is the cytoplasm. The protein localises to the cytoskeleton. Has a role in regulating actin assembly, so regulating polarized growth. The protein is Actin-binding protein wsp1 (wsp1) of Schizosaccharomyces pombe (strain 972 / ATCC 24843) (Fission yeast).